Consider the following 721-residue polypeptide: Polyribonucleotide nucleotidyltransferase (721 aa).

D495 and D501 together coordinate Mg(2+). The 60-residue stretch at 562 to 621 (PRLLSFRIDPELIGTVIGPGGRTIKGITERTNTKIDIEDGGIVTIASHDGAAAEEAQKII) folds into the KH domain. The 69-residue stretch at 631–699 (GEIFTGVVTR…SRGRINLTLR (69 aa)) folds into the S1 motif domain. Positions 702–721 (SQNSGMSYPEPTPTPVAPLN) are disordered. Over residues 711-721 (EPTPTPVAPLN) the composition is skewed to pro residues.

The protein belongs to the polyribonucleotide nucleotidyltransferase family. The cofactor is Mg(2+).

The protein resides in the cytoplasm. The enzyme catalyses RNA(n+1) + phosphate = RNA(n) + a ribonucleoside 5'-diphosphate. In terms of biological role, involved in mRNA degradation. Catalyzes the phosphorolysis of single-stranded polyribonucleotides processively in the 3'- to 5'-direction. The protein is Polyribonucleotide nucleotidyltransferase of Prochlorococcus marinus (strain MIT 9312).